Here is a 201-residue protein sequence, read N- to C-terminus: Phospholipase A2 inhibitor PIP (201 aa).

An N-terminal signal peptide occupies residues 1–19 (MKSLQTICLLFIFIARGTS). Disulfide bonds link C22–C46, C25–C32, C39–C67, C73–C94, C95–C100, C118–C143, C136–C165, and C169–C191. The N-linked (GlcNAc...) asparagine glycan is linked to N157.

Homohexamer. Glycosylated. Expressed by the liver.

The protein localises to the secreted. Functionally, inhibits the enzymatic activity of phospholipase A2 (PA2). Binds to the major PLA2 toxin of D.russelli siamensis (Daboiatoxin, AC Q7T2R1, and AC Q7T3T5) at 1-2-fold molar excess of inhibitor to toxin. It exhibits broad spectra in neutralizing the toxicity of various snake venoms and toxins and inhibits the formation of edema in mice. May bind to PLA2 through its proline-rich hydrophobic core region. This is Phospholipase A2 inhibitor PIP from Malayopython reticulatus (Reticulate python).